Consider the following 268-residue polypeptide: MENQFLAFPQFDPIIFSLGPISLRWYGLMYLIGFIFARWLAVKRANRPDSGWTVEQVDNLLFNGFAGVFLGGRIGYVLFYQWDLFVQEPSYLFRVWEGGMSFHGGLIGVIVAMLVTAKLQKRNFWVVADFVAPLIPFGLGMGRIGNFINDELWGRVTDVPWAVLFPSGGYLPRHPSQLYEFVLEGIVLFCILNWFIRKPRPAGSVAGLFLLFYGLFRFIVEFFREPDAQLGLYFGQQISMGQILSTPMILLGALFIVLAYRRRSAVKN.

7 helical membrane passes run 14 to 34 (IIFSLGPISLRWYGLMYLIGF), 60 to 80 (LLFNGFAGVFLGGRIGYVLFY), 95 to 115 (VWEGGMSFHGGLIGVIVAMLV), 124 to 144 (FWVVADFVAPLIPFGLGMGRI), 176 to 196 (SQLYEFVLEGIVLFCILNWFI), 203 to 223 (GSVAGLFLLFYGLFRFIVEFF), and 238 to 258 (ISMGQILSTPMILLGALFIVL). R143 contacts a 1,2-diacyl-sn-glycero-3-phospho-(1'-sn-glycerol).

It belongs to the Lgt family.

The protein resides in the cell inner membrane. It carries out the reaction L-cysteinyl-[prolipoprotein] + a 1,2-diacyl-sn-glycero-3-phospho-(1'-sn-glycerol) = an S-1,2-diacyl-sn-glyceryl-L-cysteinyl-[prolipoprotein] + sn-glycerol 1-phosphate + H(+). It participates in protein modification; lipoprotein biosynthesis (diacylglyceryl transfer). In terms of biological role, catalyzes the transfer of the diacylglyceryl group from phosphatidylglycerol to the sulfhydryl group of the N-terminal cysteine of a prolipoprotein, the first step in the formation of mature lipoproteins. This chain is Phosphatidylglycerol--prolipoprotein diacylglyceryl transferase, found in Mannheimia succiniciproducens (strain KCTC 0769BP / MBEL55E).